The sequence spans 499 residues: Flotillin-like protein 2 (499 aa).

Cys-37 carries S-palmitoyl cysteine lipidation. Residues 243 to 319 (LREEAKVKAE…LRLTEKLKAE (77 aa)) adopt a coiled-coil conformation.

It belongs to the band 7/mec-2 family. Flotillin subfamily. In terms of processing, may be palmitoylated.

It is found in the cell membrane. The protein localises to the membrane. It localises to the caveola. Functionally, may act as a scaffolding protein within caveolar membranes, functionally participating in formation of caveolae or caveolae-like vesicles. The sequence is that of Flotillin-like protein 2 (FLOT2) from Oryza sativa subsp. japonica (Rice).